We begin with the raw amino-acid sequence, 1232 residues long: MAEASKYKKLTPIDHVLIRPEMYVGSVDTSSSSMFVFDHEKGRMVWESLKVNHGLLKIVDEILLNASDNIANKGGRMTYIRVHITEAGEITIENDGAGIPIVRSKEHKLYIPEMVFGHLLTSSNYDDTSQNAVAGRHGYGAKLTNILSHRFSVCCRTKGKEFHMSWHDHMRRATAPRVSNVDPKEKNLTRVKFLPDYERFGLDANKISHDMKRVLHKRIMDLAAMFPSIEISLNGVPFAFKSFADYAMLYSSPSSSGEMPPAPFVYESRNGAIAFIPSLTAGTRRIFGVVNGVVTHNGGTHCNAAQEVLQSSLESVEKALKKDNKVIDTNRVLRHFMILVFLVQVQPKFDSQNKARLVSVPTMPRVPRQELMDFLLRMPFLEAHVNTVTGQLADELNKEMGAGRRMSSKSLISSITKLVDATTTRRDPRFVRTLIVTEGDSAKALAQNSLSSDQKRYTGVFPLRGKLLNVRNKNLKRLKNCKELQELFCALGLELGKIYKDAEELRYQRLLVMTDQDADGSHIKGLVINAFEALWPSLLNRNPGFISIFSTPIVKVRLRDKSTHSFFSLKEFHKWQKTHGNVSYTAKYYKALGTSTTAEGKEYFKDMDKHTMRLVVERNDHKLLDSVFDSQEVEWRKDWMTKANAYTGEVDIDRSKKTLTVPDFVHKEMVHFALAGNARALAHAVDGLKPSQRKILWAIMRRSGNESAKVAQLSGYISEVSAFHHGEMSLQETIIKMAQNFTGGNNINLLIPEGQFGSRQQLGNDHAAARYIFTKLSSLARILFPSEDEPLLDYVTEEGQQVEPNHYVPILPLLLCNGSVGIGFGFASNIPPFHPLDVSAAVRSMINGEAAKVVVRRLVPWAVGYQGEVRRGPEGEFIAAGSYQYYVDGRVHVTEIPWTLSIEAFRDHISVLASKDVVQRIADYSGANHVDIDLELTNGAMTTYAECESELSLTQRIYINGTVFSPTGVLTPLEGDLAPVLQWHYDRRLDLYKKRRQRNLGLLEAELAREKSTLKFVTHFREGKIDIVNATDDSLAKTCSKLGMVRVDDSYDYVLRKPITFYTKTSLENLNRKISETEKRIDKLKKTAPVQMWLDELDRFDRAFEEHENTAVATILKERRVNPPTGDVSRNLQQPRLELEEVKVSSSGGKSVPMRVRVRKYVPPPPSKRPHVGQSVGGGGGGGSVRSSAAAVVAHVKAEKKAARARSMQKMLLDVVARQVARVLPRLPWFLF.

Residues asparagine 65, asparagine 94, 122 to 124 (SSN), 135 to 142 (GRHGYGAK), and 352 to 354 (QNK) each bind ATP. A Toprim domain is found at 432–546 (RTLIVTEGDS…SLLNRNPGFI (115 aa)). 3 residues coordinate Mg(2+): glutamate 438, aspartate 515, and aspartate 517. A Topo IIA-type catalytic domain is found at 681–1097 (LAHAVDGLKP…APVQMWLDEL (417 aa)). Tyrosine 771 (O-(5'-phospho-DNA)-tyrosine intermediate) is an active-site residue. The interval 952–961 (SLTQRIYING) is interaction with DNA. Residues 1161–1184 (YVPPPPSKRPHVGQSVGGGGGGGS) form a disordered region. Residues 1175-1184 (SVGGGGGGGS) show a composition bias toward gly residues.

This sequence belongs to the type II topoisomerase family. Homodimer. Mg(2+) serves as cofactor. The cofactor is Mn(2+). Requires Ca(2+) as cofactor.

The protein localises to the nucleus. It catalyses the reaction ATP-dependent breakage, passage and rejoining of double-stranded DNA.. Functionally, control of topological states of DNA by transient breakage and subsequent rejoining of DNA strands. Topoisomerase II makes double-strand breaks. This Trypanosoma cruzi protein is DNA topoisomerase 2 (TOP2).